The sequence spans 252 residues: uncharacterized protein (252 aa).

Positions 106 to 140 (IQSLHARRDHLDNAVEQLKSQLSRLDSSVAILKSQ) form a coiled coil.

This is an uncharacterized protein from Caenorhabditis elegans.